Reading from the N-terminus, the 112-residue chain is ATP synthase subunit c (112 aa).

The next 2 helical transmembrane spans lie at 36–56 (FSVL…AIGM) and 81–101 (MFIA…IALI).

It belongs to the ATPase C chain family. As to quaternary structure, F-type ATPases have 2 components, F(1) - the catalytic core - and F(0) - the membrane proton channel. F(1) has five subunits: alpha(3), beta(3), gamma(1), delta(1), epsilon(1). F(0) has three main subunits: a(1), b(2) and c(10-14). The alpha and beta chains form an alternating ring which encloses part of the gamma chain. F(1) is attached to F(0) by a central stalk formed by the gamma and epsilon chains, while a peripheral stalk is formed by the delta and b chains.

The protein resides in the cell inner membrane. F(1)F(0) ATP synthase produces ATP from ADP in the presence of a proton or sodium gradient. F-type ATPases consist of two structural domains, F(1) containing the extramembraneous catalytic core and F(0) containing the membrane proton channel, linked together by a central stalk and a peripheral stalk. During catalysis, ATP synthesis in the catalytic domain of F(1) is coupled via a rotary mechanism of the central stalk subunits to proton translocation. Its function is as follows. Key component of the F(0) channel; it plays a direct role in translocation across the membrane. A homomeric c-ring of between 10-14 subunits forms the central stalk rotor element with the F(1) delta and epsilon subunits. The chain is ATP synthase subunit c from Campylobacter jejuni (strain RM1221).